Consider the following 244-residue polypeptide: DNA repair protein RecO (244 aa).

This sequence belongs to the RecO family.

In terms of biological role, involved in DNA repair and RecF pathway recombination. This chain is DNA repair protein RecO, found in Ehrlichia chaffeensis (strain ATCC CRL-10679 / Arkansas).